A 217-amino-acid chain; its full sequence is Uracil-DNA glycosylase (217 aa).

D62 (proton acceptor) is an active-site residue.

Belongs to the uracil-DNA glycosylase (UDG) superfamily. UNG family.

Its subcellular location is the cytoplasm. The enzyme catalyses Hydrolyzes single-stranded DNA or mismatched double-stranded DNA and polynucleotides, releasing free uracil.. Its function is as follows. Excises uracil residues from the DNA which can arise as a result of misincorporation of dUMP residues by DNA polymerase or due to deamination of cytosine. The protein is Uracil-DNA glycosylase of Streptococcus pyogenes serotype M28 (strain MGAS6180).